Here is a 575-residue protein sequence, read N- to C-terminus: Probable lysosomal cobalamin transporter (575 aa).

A run of 5 helical transmembrane segments spans residues 8-28 (LIWV…SVFI), 46-66 (IVAI…VALV), 95-115 (LVYY…VPFV), 144-164 (YTLS…FVPI), and 188-208 (ALTF…ALHT). An N-linked (GlcNAc...) asparagine glycan is attached at N233. A run of 4 helical transmembrane segments spans residues 314-334 (LVGL…ILTA), 376-396 (AIFT…IATV), 420-440 (VMTA…SMIV), and 504-524 (FGAI…LALI). Acidic residues predominate over residues 537 to 549 (QLDEDAEEAEEEA). A disordered region spans residues 537–556 (QLDEDAEEAEEEALLSGSRR).

Belongs to the LIMR family. LMBRD1 subfamily.

It localises to the lysosome membrane. Its function is as follows. Probable lysosomal cobalamin transporter. Required to export cobalamin from lysosomes allowing its conversion to cofactors. This Emericella nidulans (strain FGSC A4 / ATCC 38163 / CBS 112.46 / NRRL 194 / M139) (Aspergillus nidulans) protein is Probable lysosomal cobalamin transporter.